Consider the following 320-residue polypeptide: Fructose-1,6-bisphosphatase class 1 (320 aa).

Mg(2+) contacts are provided by E105, D124, L126, and D127. Residues 127–130 (DGSS), Y233, and K263 each bind substrate. A Mg(2+)-binding site is contributed by E269.

Belongs to the FBPase class 1 family. In terms of assembly, homotetramer. Requires Mg(2+) as cofactor.

It is found in the cytoplasm. The enzyme catalyses beta-D-fructose 1,6-bisphosphate + H2O = beta-D-fructose 6-phosphate + phosphate. It participates in carbohydrate biosynthesis; gluconeogenesis. The protein is Fructose-1,6-bisphosphatase class 1 of Methanocorpusculum labreanum (strain ATCC 43576 / DSM 4855 / Z).